A 796-amino-acid polypeptide reads, in one-letter code: MKHKLDVTINELRLKSIRKIVKRINTWSDEVKSYSDDALKQKTIEFKERLASGVDTLDTLLPEAYAVAREASWRVLGMYPKEVQLIGAIVLHEGNIAEMQTGEGKTLTATMPLYLNALSGKGTYLITTNDYLAKRDFEEMQPLYEWLGLTASLGFVDIVDYEYQKGEKRNIYEHDIIYTTNGRLGFDYLIDNLADSAEGKFLPQLNYGIIDEVDSIILDAAQTPLVISGAPRLQSNLFHIVKEFVDTLIEDVHFKMKKTKKEIWLLNQGIEAAQSYFNVEDLYSEQAMVLVRNINLALRAQYLFESNVDYFVYNGDIVLIDRITGRMLPGTKLQAGLHQAIEAKEGMEVSTDKSVMATITFQNLFKLFESFSGMTATGKLGESEFFDLYSKIVVQVPTDKAIQRIDEPDKVFRSVDEKNIAMIHDIVELHETGRPVLLITRTAEAAEYFSKVLFQMDIPNNLLIAQNVAKEAQMIAEAGQIGSMTVATSMAGRGTDIKLGEGVEALGGLAVIIHEHMENSRVDRQLRGRSGRQGDPGSSCIYISLDDYLVKRWSDSNLAENNQLYSLDAQRLSQSNLFNRKVKQIVVKAQRISEEQGVKAREMANEFEKSISIQRDLVYEERNRVLEIDDAENQDFKALAKDVFEMFVNEEKVLTKSRVVEYIYQNLSFQFNKDVACVNFKDKQAVVTFLLEQFEKQLALNRKNMQSAYYYNIFVQKVFLKAIDSCWLEQVDYLQQLKASVNQRQNGQRNAIFEYHRVALDSFEVMTRNIKKRMVKNICQSMITFDKEGMPVIHFP.

Residues Gln84, 102 to 106 (GEGKT), and Asp496 each bind ATP.

It belongs to the SecA family. Monomer and homodimer (Potential). Part of the accessory SecA2/SecY2 protein translocation apparatus required to export cell wall protein SraP.

It localises to the cell membrane. The protein resides in the cytoplasm. It catalyses the reaction ATP + H2O + cellular proteinSide 1 = ADP + phosphate + cellular proteinSide 2.. Its function is as follows. Part of the accessory SecA2/SecY2 system specifically required to export SraP, a serine-rich repeat cell wall protein encoded upstream in the same operon. The sequence is that of Protein translocase subunit SecA 2 from Staphylococcus aureus (strain NCTC 8325 / PS 47).